Consider the following 376-residue polypeptide: uncharacterized protein (376 aa).

Residues 19 to 39 (FVLISLILLLNLGLLLGIQIY) form a helical membrane-spanning segment.

This sequence to S.pombe SpAC5H10.12c.

The protein resides in the cytoplasm. It is found in the nucleus. Its subcellular location is the membrane. This is an uncharacterized protein from Schizosaccharomyces pombe (strain 972 / ATCC 24843) (Fission yeast).